A 411-amino-acid polypeptide reads, in one-letter code: Glutamyl-tRNA reductase (411 aa).

Substrate is bound by residues 48–51 (TCNR), Ser106, 111–113 (EDQ), and Gln117. Cys49 acts as the Nucleophile in catalysis. 186-191 (GAGDMG) provides a ligand contact to NADP(+).

The protein belongs to the glutamyl-tRNA reductase family. As to quaternary structure, homodimer.

The catalysed reaction is (S)-4-amino-5-oxopentanoate + tRNA(Glu) + NADP(+) = L-glutamyl-tRNA(Glu) + NADPH + H(+). The protein operates within porphyrin-containing compound metabolism; protoporphyrin-IX biosynthesis; 5-aminolevulinate from L-glutamyl-tRNA(Glu): step 1/2. Functionally, catalyzes the NADPH-dependent reduction of glutamyl-tRNA(Glu) to glutamate 1-semialdehyde (GSA). This Clostridium novyi (strain NT) protein is Glutamyl-tRNA reductase.